Here is a 390-residue protein sequence, read N- to C-terminus: Glutamate 5-kinase (390 aa).

K29 lines the ATP pocket. 3 residues coordinate substrate: S69, D156, and N168. 188-189 (TD) serves as a coordination point for ATP. A PUA domain is found at 295–374 (SGSLIVDAGA…EQFDRILGNN (80 aa)).

The protein belongs to the glutamate 5-kinase family.

It is found in the cytoplasm. The catalysed reaction is L-glutamate + ATP = L-glutamyl 5-phosphate + ADP. It participates in amino-acid biosynthesis; L-proline biosynthesis; L-glutamate 5-semialdehyde from L-glutamate: step 1/2. In terms of biological role, catalyzes the transfer of a phosphate group to glutamate to form L-glutamate 5-phosphate. This chain is Glutamate 5-kinase, found in Psychrobacter arcticus (strain DSM 17307 / VKM B-2377 / 273-4).